The chain runs to 206 residues: Large ribosomal subunit protein uL4 (206 aa).

The segment at 45–76 (RQGNQSAKTRAEVSGGGKKPWRQKGTGRARQG) is disordered.

It belongs to the universal ribosomal protein uL4 family. In terms of assembly, part of the 50S ribosomal subunit.

Its function is as follows. One of the primary rRNA binding proteins, this protein initially binds near the 5'-end of the 23S rRNA. It is important during the early stages of 50S assembly. It makes multiple contacts with different domains of the 23S rRNA in the assembled 50S subunit and ribosome. Forms part of the polypeptide exit tunnel. This is Large ribosomal subunit protein uL4 from Clostridium novyi (strain NT).